A 144-amino-acid polypeptide reads, in one-letter code: Large ribosomal subunit protein uL15 (144 aa).

The tract at residues 1 to 54 is disordered; it reads MRLNTLSPAEGSKKAGKRLGRGIGSGLGKTGGRGHKGQNSRSGGGVRRGFEGGQ. The segment covering 21 to 31 has biased composition (gly residues); it reads RGIGSGLGKTG.

Belongs to the universal ribosomal protein uL15 family. Part of the 50S ribosomal subunit.

Its function is as follows. Binds to the 23S rRNA. The polypeptide is Large ribosomal subunit protein uL15 (Enterobacter sp. (strain 638)).